The sequence spans 150 residues: Putative pre-16S rRNA nuclease (150 aa).

This sequence belongs to the YqgF nuclease family.

It localises to the cytoplasm. Functionally, could be a nuclease involved in processing of the 5'-end of pre-16S rRNA. The sequence is that of Putative pre-16S rRNA nuclease from Chlamydia felis (strain Fe/C-56) (Chlamydophila felis).